Consider the following 452-residue polypeptide: Glutamate--tRNA ligase 2 (452 aa).

Residues 8-18 (PSPTGRLHVGN) carry the 'HIGH' region motif. Residues 246–250 (KLSKR) carry the 'KMSKS' region motif. Lys249 lines the ATP pocket.

Belongs to the class-I aminoacyl-tRNA synthetase family. Glutamate--tRNA ligase type 1 subfamily. As to quaternary structure, monomer.

Its subcellular location is the cytoplasm. The enzyme catalyses tRNA(Glu) + L-glutamate + ATP = L-glutamyl-tRNA(Glu) + AMP + diphosphate. Its function is as follows. Catalyzes the attachment of glutamate to tRNA(Glu) in a two-step reaction: glutamate is first activated by ATP to form Glu-AMP and then transferred to the acceptor end of tRNA(Glu). This Erythrobacter litoralis (strain HTCC2594) protein is Glutamate--tRNA ligase 2.